A 208-amino-acid polypeptide reads, in one-letter code: MSNEFSLNAEKRDVQGKGASRRLRRVDGKVPGIIYGGETAPVAISVSHNQLSHALQNEAFYSHILTLDVEGTNESVILKDLQRHPYKPIIMHADFLRVQKDQKLHVNVPLHFINEDKCEGVRQGGGSISHQQTEVEVICLPANLPEFIEVDMTSVQVEQILHLSDLKLPEGVELAELTKGSDHDLPVVAVHKPKGAKADEAEGEGEAE.

The interval 1–21 (MSNEFSLNAEKRDVQGKGASR) is disordered.

The protein belongs to the bacterial ribosomal protein bL25 family. CTC subfamily. In terms of assembly, part of the 50S ribosomal subunit; part of the 5S rRNA/L5/L18/L25 subcomplex. Contacts the 5S rRNA. Binds to the 5S rRNA independently of L5 and L18.

Functionally, this is one of the proteins that binds to the 5S RNA in the ribosome where it forms part of the central protuberance. This chain is Large ribosomal subunit protein bL25, found in Hahella chejuensis (strain KCTC 2396).